A 530-amino-acid chain; its full sequence is Autoinducer-2 kinase (530 aa).

It belongs to the FGGY kinase family.

The protein resides in the cytoplasm. The enzyme catalyses (S)-4,5-dihydroxypentane-2,3-dione + ATP = (2S)-2-hydroxy-3,4-dioxopentyl phosphate + ADP + H(+). Its function is as follows. Catalyzes the phosphorylation of autoinducer-2 (AI-2) to phospho-AI-2, which subsequently inactivates the transcriptional regulator LsrR and leads to the transcription of the lsr operon. Phosphorylates the ring-open form of (S)-4,5-dihydroxypentane-2,3-dione (DPD), which is the precursor to all AI-2 signaling molecules, at the C5 position. The chain is Autoinducer-2 kinase from Yersinia pestis bv. Antiqua (strain Angola).